We begin with the raw amino-acid sequence, 201 residues long: Putative tRNA-binding protein YtpR (201 aa).

Residues 90–200 (VDLSPKFVVG…GDYEAGDAFQ (111 aa)) form the tRNA-binding domain.

In Bacillus subtilis (strain 168), this protein is Putative tRNA-binding protein YtpR (ytpR).